Consider the following 372-residue polypeptide: MTQSRRMLVLRAVVEDYIRSQEPVGSTSLTRDHDLGVSSATIRNDMAALEDEGYLIQPHTSAGRVPTEKGYRYFVDRLATVVPLSEAQRRGINSFLSGSVSLKDALQRSARLLSEITGQVAVVASPSLAKATLRHVEMVPVAMTTLLAVVITDTGRVAQHGLTIASMPAVDEINRLSNTVNEQCDGLSLSKSAETVRSIAASAGYESVRGVADTLADAFESMALDERANELYMSGTSHLAHSRSLADLAPLFDALEEQVVLMKLMSNLSEETNASGVGVAIGSEMHTPGLLHASVVSSGYGRSGAAGEPAGNDPVGEPETESETESQTNDTEPIAFVGSIGPTHMDYAATMAAVRAVARYLTAFLSEGRTQD.

The segment at 300–334 is disordered; it reads YGRSGAAGEPAGNDPVGEPETESETESQTNDTEPI.

It belongs to the HrcA family.

In terms of biological role, negative regulator of class I heat shock genes (grpE-dnaK-dnaJ and groELS operons). Prevents heat-shock induction of these operons. This Bifidobacterium longum (strain NCC 2705) protein is Heat-inducible transcription repressor HrcA.